A 418-amino-acid polypeptide reads, in one-letter code: Serine proteinase inhibitor 2.4 (418 aa).

The signal sequence occupies residues 1–28; the sequence is MAFIAALGIFMAGICPAVLCFPNGTLGR. Residues Asn23, Asn38, Asn104, and Asn269 are each glycosylated (N-linked (GlcNAc...) asparagine).

This sequence belongs to the serpin family.

It is found in the secreted. This is Serine proteinase inhibitor 2.4 from Apodemus sylvaticus (European woodmouse).